An 802-amino-acid polypeptide reads, in one-letter code: Putative transcriptional regulator cudA (802 aa).

Disordered regions lie at residues methionine 1–isoleucine 148, isoleucine 154–leucine 173, asparagine 381–asparagine 446, and glutamine 636–glutamine 658. The segment covering asparagine 25 to glutamine 63 has biased composition (low complexity). Polar residues predominate over residues aspartate 69–isoleucine 88. Residues asparagine 89–threonine 128 show a composition bias toward low complexity. Polar residues predominate over residues proline 129–threonine 142. The segment covering asparagine 381–glutamate 445 has biased composition (low complexity).

In terms of tissue distribution, expressed in the prestalk cells that constitute the slug tip (pstA cells) and in prespore cells (at protein level). Not expressed in the band of prestalk cells that lies behind the slug tip (pstO cells). Highly expressed in pstO derived papilla cells during culmination.

The protein resides in the nucleus. The protein localises to the nucleoplasm. In terms of biological role, essential for normal culmination. May function as a transcriptional regulator. The protein is Putative transcriptional regulator cudA (cudA) of Dictyostelium discoideum (Social amoeba).